The sequence spans 271 residues: Mannosyl-3-phosphoglycerate phosphatase (271 aa).

Aspartate 13 acts as the Nucleophile in catalysis. The Mg(2+) site is built by aspartate 13, aspartate 15, and aspartate 214.

This sequence belongs to the HAD-like hydrolase superfamily. MPGP family. The cofactor is Mg(2+).

The protein resides in the cytoplasm. It catalyses the reaction 2-O-(alpha-D-mannosyl)-3-phosphoglycerate + H2O = (2R)-2-O-(alpha-D-mannosyl)-glycerate + phosphate. This Shigella boydii serotype 4 (strain Sb227) protein is Mannosyl-3-phosphoglycerate phosphatase (yedP).